Here is a 150-residue protein sequence, read N- to C-terminus: Large ribosomal subunit protein bL9 (150 aa).

This sequence belongs to the bacterial ribosomal protein bL9 family.

Binds to the 23S rRNA. The sequence is that of Large ribosomal subunit protein bL9 from Pseudoalteromonas translucida (strain TAC 125).